Here is a 161-residue protein sequence, read N- to C-terminus: S-ribosylhomocysteine lyase (161 aa).

His57, His61, and Cys124 together coordinate Fe cation.

The protein belongs to the LuxS family. Homodimer. Fe cation is required as a cofactor.

It catalyses the reaction S-(5-deoxy-D-ribos-5-yl)-L-homocysteine = (S)-4,5-dihydroxypentane-2,3-dione + L-homocysteine. Its function is as follows. Involved in the synthesis of autoinducer 2 (AI-2) which is secreted by bacteria and is used to communicate both the cell density and the metabolic potential of the environment. The regulation of gene expression in response to changes in cell density is called quorum sensing. Catalyzes the transformation of S-ribosylhomocysteine (RHC) to homocysteine (HC) and 4,5-dihydroxy-2,3-pentadione (DPD). The polypeptide is S-ribosylhomocysteine lyase (Macrococcus caseolyticus (strain JCSC5402) (Macrococcoides caseolyticum)).